The primary structure comprises 239 residues: Ribitol-5-phosphate cytidylyltransferase (239 aa).

CTP-binding positions include 7 to 10 (FAGG) and 80 to 86 (GETGQMS).

Belongs to the IspD/TarI cytidylyltransferase family. TarI subfamily.

It catalyses the reaction D-ribitol 5-phosphate + CTP + H(+) = CDP-L-ribitol + diphosphate. It functions in the pathway cell wall biogenesis; poly(ribitol phosphate) teichoic acid biosynthesis. In terms of biological role, catalyzes the transfer of the cytidylyl group of CTP to D-ribitol 5-phosphate. This is Ribitol-5-phosphate cytidylyltransferase from Streptococcus agalactiae serotype III (strain NEM316).